A 129-amino-acid polypeptide reads, in one-letter code: Large ribosomal subunit protein bL12c (129 aa).

This sequence belongs to the bacterial ribosomal protein bL12 family. As to quaternary structure, homodimer. Part of the ribosomal stalk of the 50S ribosomal subunit. Forms a multimeric L10(L12)X complex, where L10 forms an elongated spine to which 2 to 4 L12 dimers bind in a sequential fashion. Binds GTP-bound translation factors.

The protein localises to the plastid. Its subcellular location is the chloroplast. Its function is as follows. Forms part of the ribosomal stalk which helps the ribosome interact with GTP-bound translation factors. Is thus essential for accurate translation. The protein is Large ribosomal subunit protein bL12c of Porphyra purpurea (Red seaweed).